A 447-amino-acid chain; its full sequence is Chromosomal replication initiator protein DnaA (447 aa).

The interval 1 to 70 (MQDFWSKAMD…EEILSEQLGE (70 aa)) is domain I, interacts with DnaA modulators. Positions 70–110 (EPVTLLFAADPALEKPVASKTQTVTPVQSGGETGDQENFHS) are domain II. The interval 87–109 (ASKTQTVTPVQSGGETGDQENFH) is disordered. Over residues 88-99 (SKTQTVTPVQSG) the composition is skewed to polar residues. Residues 111–327 (GLDPRYTFDS…GALIRVSAYA (217 aa)) are domain III, AAA+ region. The ATP site is built by Gly-155, Gly-157, Lys-158, and Thr-159. Residues 328 to 447 (SLTGKPITMA…LASLKSMLQK (120 aa)) are domain IV, binds dsDNA.

The protein belongs to the DnaA family. In terms of assembly, oligomerizes as a right-handed, spiral filament on DNA at oriC.

It is found in the cytoplasm. Its function is as follows. Plays an essential role in the initiation and regulation of chromosomal replication. ATP-DnaA binds to the origin of replication (oriC) to initiate formation of the DNA replication initiation complex once per cell cycle. Binds the DnaA box (a 9 base pair repeat at the origin) and separates the double-stranded (ds)DNA. Forms a right-handed helical filament on oriC DNA; dsDNA binds to the exterior of the filament while single-stranded (ss)DNA is stabiized in the filament's interior. The ATP-DnaA-oriC complex binds and stabilizes one strand of the AT-rich DNA unwinding element (DUE), permitting loading of DNA polymerase. After initiation quickly degrades to an ADP-DnaA complex that is not apt for DNA replication. Binds acidic phospholipids. The polypeptide is Chromosomal replication initiator protein DnaA (Magnetococcus marinus (strain ATCC BAA-1437 / JCM 17883 / MC-1)).